The sequence spans 122 residues: MIQMQSTLDVACNSGARRVQCIKVLGGSHRRYAGIGDIIKVSVKEAIPRGKAKKGDVYSAVVVRTKKGVRRPDGSVIRFDRNAAVLLNANNAPIGTRIFGPVTRELRTEQFMKIVSLAPEVL.

The protein belongs to the universal ribosomal protein uL14 family. As to quaternary structure, part of the 50S ribosomal subunit. Forms a cluster with proteins L3 and L19. In the 70S ribosome, L14 and L19 interact and together make contacts with the 16S rRNA in bridges B5 and B8.

Binds to 23S rRNA. Forms part of two intersubunit bridges in the 70S ribosome. In Shewanella woodyi (strain ATCC 51908 / MS32), this protein is Large ribosomal subunit protein uL14.